The sequence spans 405 residues: DNA primase DnaG (405 aa).

The Toprim domain occupies 172–248 (DSIIVVEGRA…HIDYIARAPP (77 aa)). Mg(2+) is bound by residues Glu-178, Asp-222, and Asp-224. Residues 279 to 302 (AAGEKTESQMSPQQPQLTQTQPTT) are disordered. Low complexity predominate over residues 290-302 (PQQPQLTQTQPTT).

This sequence belongs to the archaeal DnaG primase family. In terms of assembly, forms a ternary complex with MCM helicase and DNA. Component of the archaeal exosome complex. Mg(2+) serves as cofactor.

It carries out the reaction ssDNA + n NTP = ssDNA/pppN(pN)n-1 hybrid + (n-1) diphosphate.. Its function is as follows. RNA polymerase that catalyzes the synthesis of short RNA molecules used as primers for DNA polymerase during DNA replication. Also part of the exosome, which is a complex involved in RNA degradation. Acts as a poly(A)-binding protein that enhances the interaction between heteromeric, adenine-rich transcripts and the exosome. The sequence is that of DNA primase DnaG from Pyrobaculum islandicum (strain DSM 4184 / JCM 9189 / GEO3).